A 210-amino-acid chain; its full sequence is ATP-dependent Clp protease proteolytic subunit (210 aa).

Ser106 functions as the Nucleophile in the catalytic mechanism. Residue His131 is part of the active site.

It belongs to the peptidase S14 family. In terms of assembly, fourteen ClpP subunits assemble into 2 heptameric rings which stack back to back to give a disk-like structure with a central cavity, resembling the structure of eukaryotic proteasomes.

Its subcellular location is the cytoplasm. The catalysed reaction is Hydrolysis of proteins to small peptides in the presence of ATP and magnesium. alpha-casein is the usual test substrate. In the absence of ATP, only oligopeptides shorter than five residues are hydrolyzed (such as succinyl-Leu-Tyr-|-NHMec, and Leu-Tyr-Leu-|-Tyr-Trp, in which cleavage of the -Tyr-|-Leu- and -Tyr-|-Trp bonds also occurs).. Cleaves peptides in various proteins in a process that requires ATP hydrolysis. Has a chymotrypsin-like activity. Plays a major role in the degradation of misfolded proteins. This is ATP-dependent Clp protease proteolytic subunit from Bradyrhizobium sp. (strain BTAi1 / ATCC BAA-1182).